A 454-amino-acid polypeptide reads, in one-letter code: UPF0210 protein Cphy_2797 (454 aa).

It belongs to the UPF0210 family. In terms of assembly, homodimer.

The chain is UPF0210 protein Cphy_2797 from Lachnoclostridium phytofermentans (strain ATCC 700394 / DSM 18823 / ISDg) (Clostridium phytofermentans).